The sequence spans 302 residues: Sulfate adenylyltransferase subunit 2 (302 aa).

This sequence belongs to the PAPS reductase family. CysD subfamily. Heterodimer composed of CysD, the smaller subunit, and CysN.

It catalyses the reaction sulfate + ATP + H(+) = adenosine 5'-phosphosulfate + diphosphate. The protein operates within sulfur metabolism; hydrogen sulfide biosynthesis; sulfite from sulfate: step 1/3. Functionally, with CysN forms the ATP sulfurylase (ATPS) that catalyzes the adenylation of sulfate producing adenosine 5'-phosphosulfate (APS) and diphosphate, the first enzymatic step in sulfur assimilation pathway. APS synthesis involves the formation of a high-energy phosphoric-sulfuric acid anhydride bond driven by GTP hydrolysis by CysN coupled to ATP hydrolysis by CysD. The sequence is that of Sulfate adenylyltransferase subunit 2 from Methylococcus capsulatus (strain ATCC 33009 / NCIMB 11132 / Bath).